A 473-amino-acid polypeptide reads, in one-letter code: MIRAFLVFPYLYILVQSNGYTGGIMVQLNDYILNHIAKTPLILSRYNKEKKRFDYDILKEKVDKYIENDKKELILLYGLRGLGKTTLLSQIYHYARLKIEPNRVLYFSMDELKLNDIKLMDALKAYSEIFGINLYEEKIILLLDEIQYERHWDLVLKNLYDTTNIFIIATGSSALKLRESPDLARRALHKPIYPMTFREYLYLTKNIKIESLFEEVILNNNLDNFKKVYAKVYSQILEEDVKKYLRIGSLPFALEDDELEVYNKIYTMLERIIYKDVREVKEFDMETLDKAFKLLYLLANPKGERYSYESLANTLEIAKGTLINLVDVLEKCELLFKIYPYGSMDKKVRKSQKIKFLPVPIKTALWHKMGVVIDDVCYGSLLEDVVAFYLYLFCKKKGYSLSYEPKKGGADFILISPYMEKIVIEVGLGKKSSKQVLKSMERVKASKGIIIGDELKVEGNILYIPWKGFLLLI.

A signal peptide spans 1–19; it reads MIRAFLVFPYLYILVQSNG.

This is an uncharacterized protein from Methanocaldococcus jannaschii (strain ATCC 43067 / DSM 2661 / JAL-1 / JCM 10045 / NBRC 100440) (Methanococcus jannaschii).